An 807-amino-acid polypeptide reads, in one-letter code: Enhancer of polycomb homolog 2 (807 aa).

Glycyl lysine isopeptide (Lys-Gly) (interchain with G-Cter in SUMO2) cross-links involve residues Lys135, Lys195, Lys324, and Lys362. Residues 376-396 (DEFPQVLSPVSEPEEENDPDG) form a disordered region. Ser538 carries the phosphoserine modification. Over residues 600 to 613 (QLQQKQQSQHSSQQ) the composition is skewed to low complexity. Disordered stretches follow at residues 600-628 (QLQQ…DCMS) and 645-673 (SAPV…QPSG). Polar residues-rich tracts occupy residues 614-628 (THPK…DCMS) and 657-673 (EQNT…QPSG). Ser754 carries the post-translational modification Phosphoserine.

Belongs to the enhancer of polycomb family.

Its subcellular location is the nucleus. Its function is as follows. May play a role in transcription or DNA repair. The protein is Enhancer of polycomb homolog 2 (EPC2) of Homo sapiens (Human).